The sequence spans 160 residues: 2-C-methyl-D-erythritol 2,4-cyclodiphosphate synthase (160 aa).

Residues aspartate 11 and histidine 13 each coordinate a divalent metal cation. 4-CDP-2-C-methyl-D-erythritol 2-phosphate contacts are provided by residues 11-13 and 37-38; these read DIH and HS. Histidine 45 is a binding site for a divalent metal cation. Residues 59 to 61, 135 to 138, and arginine 145 each bind 4-CDP-2-C-methyl-D-erythritol 2-phosphate; these read DIG and TTNE.

Belongs to the IspF family. As to quaternary structure, homotrimer. A divalent metal cation is required as a cofactor.

The enzyme catalyses 4-CDP-2-C-methyl-D-erythritol 2-phosphate = 2-C-methyl-D-erythritol 2,4-cyclic diphosphate + CMP. It functions in the pathway isoprenoid biosynthesis; isopentenyl diphosphate biosynthesis via DXP pathway; isopentenyl diphosphate from 1-deoxy-D-xylulose 5-phosphate: step 4/6. Its function is as follows. Involved in the biosynthesis of isopentenyl diphosphate (IPP) and dimethylallyl diphosphate (DMAPP), two major building blocks of isoprenoid compounds. Catalyzes the conversion of 4-diphosphocytidyl-2-C-methyl-D-erythritol 2-phosphate (CDP-ME2P) to 2-C-methyl-D-erythritol 2,4-cyclodiphosphate (ME-CPP) with a corresponding release of cytidine 5-monophosphate (CMP). In Nostoc punctiforme (strain ATCC 29133 / PCC 73102), this protein is 2-C-methyl-D-erythritol 2,4-cyclodiphosphate synthase.